The chain runs to 456 residues: tRNA modification GTPase MnmE (456 aa).

3 residues coordinate (6S)-5-formyl-5,6,7,8-tetrahydrofolate: Arg23, Glu85, and Arg124. In terms of domain architecture, TrmE-type G spans 220–376; the sequence is GVAVLIAGKP…LKESIFQTFI (157 aa). Asn230 serves as a coordination point for K(+). Residues 230-235, 249-255, and 274-277 contribute to the GTP site; these read NVGKSS, TSVPGTT, and DTAG. A Mg(2+)-binding site is contributed by Ser234. Residues Thr249, Val251, and Thr254 each coordinate K(+). Thr255 serves as a coordination point for Mg(2+). Lys456 serves as a coordination point for (6S)-5-formyl-5,6,7,8-tetrahydrofolate.

The protein belongs to the TRAFAC class TrmE-Era-EngA-EngB-Septin-like GTPase superfamily. TrmE GTPase family. Homodimer. Heterotetramer of two MnmE and two MnmG subunits. It depends on K(+) as a cofactor.

The protein resides in the cytoplasm. Its function is as follows. Exhibits a very high intrinsic GTPase hydrolysis rate. Involved in the addition of a carboxymethylaminomethyl (cmnm) group at the wobble position (U34) of certain tRNAs, forming tRNA-cmnm(5)s(2)U34. In Geobacter sulfurreducens (strain ATCC 51573 / DSM 12127 / PCA), this protein is tRNA modification GTPase MnmE.